The primary structure comprises 647 residues: Acetyl-coenzyme A synthetase (647 aa).

CoA is bound by residues 190–193 (RGGK), threonine 310, and asparagine 334. Residues 386–388 (GEP), 410–415 (DTWWQT), aspartate 499, and arginine 514 contribute to the ATP site. Position 522 (serine 522) interacts with CoA. ATP is bound at residue arginine 525. Positions 536, 538, and 541 each coordinate Mg(2+). Arginine 583 is a binding site for CoA. The residue at position 608 (lysine 608) is an N6-acetyllysine.

Belongs to the ATP-dependent AMP-binding enzyme family. The cofactor is Mg(2+). Post-translationally, acetylated. Deacetylation by the SIR2-homolog deacetylase activates the enzyme.

The enzyme catalyses acetate + ATP + CoA = acetyl-CoA + AMP + diphosphate. In terms of biological role, catalyzes the conversion of acetate into acetyl-CoA (AcCoA), an essential intermediate at the junction of anabolic and catabolic pathways. AcsA undergoes a two-step reaction. In the first half reaction, AcsA combines acetate with ATP to form acetyl-adenylate (AcAMP) intermediate. In the second half reaction, it can then transfer the acetyl group from AcAMP to the sulfhydryl group of CoA, forming the product AcCoA. The polypeptide is Acetyl-coenzyme A synthetase (Xanthomonas axonopodis pv. citri (strain 306)).